A 467-amino-acid chain; its full sequence is ATP-dependent protease ATPase subunit HslU (467 aa).

ATP contacts are provided by residues Val-22 and 64-69 (GVGKTE). The tract at residues 149–192 (QTNNPLESLFGGAIPNFGQNNEDEEEPPTEEIKTKRSEIKRQLE) is disordered. The segment covering 178–192 (EEIKTKRSEIKRQLE) has biased composition (basic and acidic residues). Residues Asp-280, Glu-345, and Arg-417 each coordinate ATP.

This sequence belongs to the ClpX chaperone family. HslU subfamily. As to quaternary structure, a double ring-shaped homohexamer of HslV is capped on each side by a ring-shaped HslU homohexamer. The assembly of the HslU/HslV complex is dependent on binding of ATP.

It localises to the cytoplasm. In terms of biological role, ATPase subunit of a proteasome-like degradation complex; this subunit has chaperone activity. The binding of ATP and its subsequent hydrolysis by HslU are essential for unfolding of protein substrates subsequently hydrolyzed by HslV. HslU recognizes the N-terminal part of its protein substrates and unfolds these before they are guided to HslV for hydrolysis. In Staphylococcus aureus (strain Mu3 / ATCC 700698), this protein is ATP-dependent protease ATPase subunit HslU.